The sequence spans 557 residues: CTP synthase (557 aa).

Positions 1–270 are amidoligase domain; that stretch reads MTKYVFVTGG…DAIICEELKL (270 aa). Ser-13 is a CTP binding site. Ser-13 is a binding site for UTP. ATP-binding positions include 14–19 and Asp-71; that span reads SLGKGI. Asp-71 and Glu-144 together coordinate Mg(2+). Residues 151 to 153, 191 to 196, and Lys-227 each bind CTP; these read DIE and KTKPTQ. UTP is bound by residues 191-196 and Lys-227; that span reads KTKPTQ. One can recognise a Glutamine amidotransferase type-1 domain in the interval 295–547; it reads TIGMVGKYVD…VEAALAHHEA (253 aa). An L-glutamine-binding site is contributed by Gly-356. Cys-383 functions as the Nucleophile; for glutamine hydrolysis in the catalytic mechanism. L-glutamine is bound by residues 384–387, Glu-407, and Arg-473; that span reads LGMQ. Residues His-520 and Glu-522 contribute to the active site.

The protein belongs to the CTP synthase family. Homotetramer.

The catalysed reaction is UTP + L-glutamine + ATP + H2O = CTP + L-glutamate + ADP + phosphate + 2 H(+). It catalyses the reaction L-glutamine + H2O = L-glutamate + NH4(+). It carries out the reaction UTP + NH4(+) + ATP = CTP + ADP + phosphate + 2 H(+). It participates in pyrimidine metabolism; CTP biosynthesis via de novo pathway; CTP from UDP: step 2/2. With respect to regulation, allosterically activated by GTP, when glutamine is the substrate; GTP has no effect on the reaction when ammonia is the substrate. The allosteric effector GTP functions by stabilizing the protein conformation that binds the tetrahedral intermediate(s) formed during glutamine hydrolysis. Inhibited by the product CTP, via allosteric rather than competitive inhibition. Functionally, catalyzes the ATP-dependent amination of UTP to CTP with either L-glutamine or ammonia as the source of nitrogen. Regulates intracellular CTP levels through interactions with the four ribonucleotide triphosphates. This chain is CTP synthase, found in Paraburkholderia phytofirmans (strain DSM 17436 / LMG 22146 / PsJN) (Burkholderia phytofirmans).